The primary structure comprises 102 residues: Protein PAPPAS (102 aa).

Transmembrane regions (helical) follow at residues 13–33 (LFLT…FVKW) and 82–102 (IGSD…FFFF).

As to expression, expressed in placenta with lower expression in brain, kidney and testis.

The protein resides in the endoplasmic reticulum membrane. This chain is Protein PAPPAS (PAPPA-AS1), found in Homo sapiens (Human).